We begin with the raw amino-acid sequence, 150 residues long: uncharacterized protein (150 aa).

Residues 1–39 (MKQRFSQVATVIFFVMSIRSPRNLGFFFTLALFVVLVCS) form the signal peptide.

This is an uncharacterized protein from Saccharomyces cerevisiae (strain ATCC 204508 / S288c) (Baker's yeast).